The chain runs to 396 residues: Elongation factor Tu (396 aa).

In terms of domain architecture, tr-type G spans 10–206 (KPHCNIGTIG…NVDEYIPQPE (197 aa)). The segment at 19 to 26 (GHVDHGKT) is G1. 19–26 (GHVDHGKT) is a binding site for GTP. Thr-26 provides a ligand contact to Mg(2+). Residues 60-64 (GITIS) form a G2 region. The tract at residues 81–84 (DCPG) is G3. GTP contacts are provided by residues 81–85 (DCPGH) and 136–139 (NKCD). Residues 136–139 (NKCD) are G4. A G5 region spans residues 174 to 176 (SAL).

This sequence belongs to the TRAFAC class translation factor GTPase superfamily. Classic translation factor GTPase family. EF-Tu/EF-1A subfamily. As to quaternary structure, monomer.

The protein localises to the cytoplasm. The enzyme catalyses GTP + H2O = GDP + phosphate + H(+). Its function is as follows. GTP hydrolase that promotes the GTP-dependent binding of aminoacyl-tRNA to the A-site of ribosomes during protein biosynthesis. The chain is Elongation factor Tu from Bradyrhizobium sp. (strain BTAi1 / ATCC BAA-1182).